Consider the following 882-residue polypeptide: Alanine--tRNA ligase (882 aa).

Zn(2+) contacts are provided by H571, H575, C673, and H677.

Belongs to the class-II aminoacyl-tRNA synthetase family. Zn(2+) is required as a cofactor.

The protein localises to the cytoplasm. The enzyme catalyses tRNA(Ala) + L-alanine + ATP = L-alanyl-tRNA(Ala) + AMP + diphosphate. Catalyzes the attachment of alanine to tRNA(Ala) in a two-step reaction: alanine is first activated by ATP to form Ala-AMP and then transferred to the acceptor end of tRNA(Ala). Also edits incorrectly charged Ser-tRNA(Ala) and Gly-tRNA(Ala) via its editing domain. The protein is Alanine--tRNA ligase of Desulfotalea psychrophila (strain LSv54 / DSM 12343).